The chain runs to 190 residues: Abscisic acid receptor PYL2 (190 aa).

The interval 28 to 182 (FEPDPTTCTS…NLQKLGVAAT (155 aa)) is START-like. Abscisate contacts are provided by residues K64, 93 to 98 (ASTSTE), 120 to 126 (RLKNYKS), and E147. Positions 89–93 (SGLPA) match the Gate loop motif. Positions 119–121 (HRL) match the Latch loop motif.

The protein belongs to the PYR/PYL/RCAR abscisic acid intracellular receptor family. Homodimer. Binds ABA on one subunit only. Interacts with HAB1, ABI1 and ABI2, and possibly with other PP2Cs. Binds to CARs protein in an ABA-independent manner, both at the plasma membrane and in the nucleus.

The protein resides in the cytoplasm. It localises to the nucleus. Its subcellular location is the cell membrane. Functionally, receptor for abscisic acid (ABA) required for ABA-mediated responses such as stomatal closure and germination inhibition. Inhibits the activity of group-A protein phosphatases type 2C (PP2Cs) when activated by ABA. Can be activated by both (-)-ABA and (+)-ABA. This Arabidopsis thaliana (Mouse-ear cress) protein is Abscisic acid receptor PYL2 (PYL2).